The primary structure comprises 888 residues: Alanine--tRNA ligase (888 aa).

Positions 573, 577, 676, and 680 each coordinate Zn(2+).

This sequence belongs to the class-II aminoacyl-tRNA synthetase family. It depends on Zn(2+) as a cofactor.

Its subcellular location is the cytoplasm. It carries out the reaction tRNA(Ala) + L-alanine + ATP = L-alanyl-tRNA(Ala) + AMP + diphosphate. Catalyzes the attachment of alanine to tRNA(Ala) in a two-step reaction: alanine is first activated by ATP to form Ala-AMP and then transferred to the acceptor end of tRNA(Ala). Also edits incorrectly charged Ser-tRNA(Ala) and Gly-tRNA(Ala) via its editing domain. The protein is Alanine--tRNA ligase of Corynebacterium glutamicum (strain ATCC 13032 / DSM 20300 / JCM 1318 / BCRC 11384 / CCUG 27702 / LMG 3730 / NBRC 12168 / NCIMB 10025 / NRRL B-2784 / 534).